The following is a 455-amino-acid chain: DNA repair protein RadA (455 aa).

Residues 12 to 29 form a C4-type zinc finger; it reads CSECGSYSPKWLGQCPGC. 95–102 provides a ligand contact to ATP; sequence GEPGIGKS. Residues 252-256 carry the RadA KNRFG motif motif; sequence KNRFG. Residues 351–455 form a lon-protease-like region; that stretch reads DVFLSIAGGL…TIKDAVRLLQ (105 aa).

The protein belongs to the RecA family. RadA subfamily.

Its function is as follows. DNA-dependent ATPase involved in processing of recombination intermediates, plays a role in repairing DNA breaks. Stimulates the branch migration of RecA-mediated strand transfer reactions, allowing the 3' invading strand to extend heteroduplex DNA faster. Binds ssDNA in the presence of ADP but not other nucleotides, has ATPase activity that is stimulated by ssDNA and various branched DNA structures, but inhibited by SSB. Does not have RecA's homology-searching function. This Chlamydia muridarum (strain MoPn / Nigg) protein is DNA repair protein RadA.